The primary structure comprises 340 residues: Ketol-acid reductoisomerase (NADP(+)) (340 aa).

One can recognise a KARI N-terminal Rossmann domain in the interval 1 to 182; it reads MRVYYDRDCD…GGGRSGIIET (182 aa). NADP(+) is bound by residues 24-27, Arg48, Ser51, Ser53, and 83-86; these read YGSQ and DELQ. His108 is a catalytic residue. Position 134 (Gly134) interacts with NADP(+). In terms of domain architecture, KARI C-terminal knotted spans 183–329; that stretch reads NFREECETDL…KELRGMMPWI (147 aa). Asp191, Glu195, Glu227, and Glu231 together coordinate Mg(2+). Substrate is bound at residue Ser252.

It belongs to the ketol-acid reductoisomerase family. Requires Mg(2+) as cofactor.

The catalysed reaction is (2R)-2,3-dihydroxy-3-methylbutanoate + NADP(+) = (2S)-2-acetolactate + NADPH + H(+). The enzyme catalyses (2R,3R)-2,3-dihydroxy-3-methylpentanoate + NADP(+) = (S)-2-ethyl-2-hydroxy-3-oxobutanoate + NADPH + H(+). It participates in amino-acid biosynthesis; L-isoleucine biosynthesis; L-isoleucine from 2-oxobutanoate: step 2/4. The protein operates within amino-acid biosynthesis; L-valine biosynthesis; L-valine from pyruvate: step 2/4. Functionally, involved in the biosynthesis of branched-chain amino acids (BCAA). Catalyzes an alkyl-migration followed by a ketol-acid reduction of (S)-2-acetolactate (S2AL) to yield (R)-2,3-dihydroxy-isovalerate. In the isomerase reaction, S2AL is rearranged via a Mg-dependent methyl migration to produce 3-hydroxy-3-methyl-2-ketobutyrate (HMKB). In the reductase reaction, this 2-ketoacid undergoes a metal-dependent reduction by NADPH to yield (R)-2,3-dihydroxy-isovalerate. The protein is Ketol-acid reductoisomerase (NADP(+)) of Dinoroseobacter shibae (strain DSM 16493 / NCIMB 14021 / DFL 12).